Consider the following 117-residue polypeptide: Large-conductance mechanosensitive channel (117 aa).

The next 3 membrane-spanning stretches (helical) occupy residues 7–27 (EFALKGNVLDLAVAVVMGAAF), 30–50 (IVTALVSYIIMPLIGLIFGTV), and 64–84 (GMFVQSIIDFIIIAFALFIFV).

This sequence belongs to the MscL family. As to quaternary structure, homopentamer.

It localises to the cell membrane. Its function is as follows. Channel that opens in response to stretch forces in the membrane lipid bilayer. May participate in the regulation of osmotic pressure changes within the cell. The chain is Large-conductance mechanosensitive channel from Staphylococcus saprophyticus subsp. saprophyticus (strain ATCC 15305 / DSM 20229 / NCIMB 8711 / NCTC 7292 / S-41).